The chain runs to 459 residues: N-chimaerin (459 aa).

A2 is modified (N-acetylalanine). Residues 49-135 (EFHGMISREA…IETKAAEYIA (87 aa)) form the SH2 domain. At T192 the chain carries Phosphothreonine. The segment at 205–255 (IHNFKVHTFRGPHWCEYCANFMWGLIAQGVKCADCGLNVHKQCSKMVPNDC) adopts a Phorbol-ester/DAG-type zinc-finger fold. In terms of domain architecture, Rho-GAP spans 268–459 (CDLTTLVKAH…LLIKNEDILF (192 aa)). T340 is subject to Phosphothreonine.

Interacts with EPHA4; effector of EPHA4 in axon guidance linking EPHA4 activation to RAC1 regulation. Post-translationally, phosphorylated. Phosphorylation is EPHA4 kinase activity-dependent. In neurons in brain regions that are involved in learning and memory processes.

Functionally, GTPase-activating protein for p21-rac and a phorbol ester receptor. Involved in the assembly of neuronal locomotor circuits as a direct effector of EPHA4 in axon guidance. This Homo sapiens (Human) protein is N-chimaerin (CHN1).